Reading from the N-terminus, the 335-residue chain is Probable cytosolic iron-sulfur protein assembly protein Ciao1 (335 aa).

WD repeat units follow at residues 12-51 (GHKG…WSTK), 57-96 (GHKR…FECN), 101-140 (GHEN…EFEC), 146-185 (PHTQ…SDWD), 192-231 (SHTS…NDAG), 250-289 (QHSR…KRDE), and 301-335 (AHEQ…KMLD).

This sequence belongs to the WD repeat CIA1 family.

Its function is as follows. Essential component of the cytosolic iron-sulfur (Fe/S) protein assembly machinery. Required for the maturation of extramitochondrial Fe/S proteins. The chain is Probable cytosolic iron-sulfur protein assembly protein Ciao1 from Drosophila willistoni (Fruit fly).